Consider the following 111-residue polypeptide: Large ribosomal subunit protein uL23 (111 aa).

It belongs to the universal ribosomal protein uL23 family. As to quaternary structure, part of the 50S ribosomal subunit. Contacts protein L29, and trigger factor when it is bound to the ribosome.

One of the early assembly proteins it binds 23S rRNA. One of the proteins that surrounds the polypeptide exit tunnel on the outside of the ribosome. Forms the main docking site for trigger factor binding to the ribosome. The protein is Large ribosomal subunit protein uL23 of Chlamydia trachomatis serovar A (strain ATCC VR-571B / DSM 19440 / HAR-13).